The primary structure comprises 427 residues: 4-hydroxy-3-methylbut-2-en-1-yl diphosphate synthase (flavodoxin) (427 aa).

Residues Cys-300, Cys-303, Cys-346, and Glu-353 each coordinate [4Fe-4S] cluster.

Belongs to the IspG family. The cofactor is [4Fe-4S] cluster.

It carries out the reaction (2E)-4-hydroxy-3-methylbut-2-enyl diphosphate + oxidized [flavodoxin] + H2O + 2 H(+) = 2-C-methyl-D-erythritol 2,4-cyclic diphosphate + reduced [flavodoxin]. Its pathway is isoprenoid biosynthesis; isopentenyl diphosphate biosynthesis via DXP pathway; isopentenyl diphosphate from 1-deoxy-D-xylulose 5-phosphate: step 5/6. Converts 2C-methyl-D-erythritol 2,4-cyclodiphosphate (ME-2,4cPP) into 1-hydroxy-2-methyl-2-(E)-butenyl 4-diphosphate. The polypeptide is 4-hydroxy-3-methylbut-2-en-1-yl diphosphate synthase (flavodoxin) (Chromobacterium violaceum (strain ATCC 12472 / DSM 30191 / JCM 1249 / CCUG 213 / NBRC 12614 / NCIMB 9131 / NCTC 9757 / MK)).